Reading from the N-terminus, the 370-residue chain is MKEPIWAEINLEAIRHNIKEIRKMVGPNREIMAVVKANGYGHGAVPVARVALEAGATRLAVARLSEAQELRRAGLKVPILLLGYISPDQIGDALEYNVTLTVFRFDLAKKIAAIAQGRGQRATVHLKVDTGMGRIGFTPDEEGLAEITAVCALNGLDVEGIYTHFATADEQDKSYTRWQFKRFMLVLNRLEEQGITFSLRHCANSAAIMEFPETYLDLVRPGIILYGLYPSEEVDKGKLLLQPAMTLKARITHVKKVNSGTKISYGCTYTVPQETDIASLPLGYADGYPRLLSSKGQVLVKGKRARVVGRVCMDQCMVDVGHIAEVKVHDEVIIFGGAELPVEEVATWLGTINYEVVCWVGSRVPRVYIG.

Lys36 functions as the Proton acceptor; specific for D-alanine in the catalytic mechanism. An N6-(pyridoxal phosphate)lysine modification is found at Lys36. Arg134 is a binding site for substrate. Tyr265 acts as the Proton acceptor; specific for L-alanine in catalysis. Met313 contributes to the substrate binding site.

Belongs to the alanine racemase family. It depends on pyridoxal 5'-phosphate as a cofactor.

The enzyme catalyses L-alanine = D-alanine. It functions in the pathway amino-acid biosynthesis; D-alanine biosynthesis; D-alanine from L-alanine: step 1/1. Functionally, catalyzes the interconversion of L-alanine and D-alanine. May also act on other amino acids. The sequence is that of Alanine racemase (alr) from Desulforamulus reducens (strain ATCC BAA-1160 / DSM 100696 / MI-1) (Desulfotomaculum reducens).